The following is a 290-amino-acid chain: Ribosomal RNA small subunit methyltransferase A (290 aa).

S-adenosyl-L-methionine-binding residues include Asn-27, Leu-29, Gly-54, Glu-75, Asp-100, and Asn-125.

This sequence belongs to the class I-like SAM-binding methyltransferase superfamily. rRNA adenine N(6)-methyltransferase family. RsmA subfamily.

It localises to the cytoplasm. It catalyses the reaction adenosine(1518)/adenosine(1519) in 16S rRNA + 4 S-adenosyl-L-methionine = N(6)-dimethyladenosine(1518)/N(6)-dimethyladenosine(1519) in 16S rRNA + 4 S-adenosyl-L-homocysteine + 4 H(+). Specifically dimethylates two adjacent adenosines (A1518 and A1519) in the loop of a conserved hairpin near the 3'-end of 16S rRNA in the 30S particle. May play a critical role in biogenesis of 30S subunits. The polypeptide is Ribosomal RNA small subunit methyltransferase A (Streptococcus agalactiae serotype Ia (strain ATCC 27591 / A909 / CDC SS700)).